We begin with the raw amino-acid sequence, 219 residues long: Pyridoxine/pyridoxamine 5'-phosphate oxidase (219 aa).

Residues arginine 15–tyrosine 18 and lysine 73 contribute to the substrate site. FMN is bound by residues arginine 68 to lysine 73, tyrosine 83 to threonine 84, arginine 89, lysine 90, and glutamine 112. 3 residues coordinate substrate: tyrosine 130, arginine 134, and serine 138. Residues glutamine 147 to serine 148 and tryptophan 192 contribute to the FMN site. Position 198-200 (arginine 198–histidine 200) interacts with substrate. Arginine 202 serves as a coordination point for FMN.

Belongs to the pyridoxamine 5'-phosphate oxidase family. In terms of assembly, homodimer. FMN is required as a cofactor.

It catalyses the reaction pyridoxamine 5'-phosphate + O2 + H2O = pyridoxal 5'-phosphate + H2O2 + NH4(+). The enzyme catalyses pyridoxine 5'-phosphate + O2 = pyridoxal 5'-phosphate + H2O2. It functions in the pathway cofactor metabolism; pyridoxal 5'-phosphate salvage; pyridoxal 5'-phosphate from pyridoxamine 5'-phosphate: step 1/1. It participates in cofactor metabolism; pyridoxal 5'-phosphate salvage; pyridoxal 5'-phosphate from pyridoxine 5'-phosphate: step 1/1. Catalyzes the oxidation of either pyridoxine 5'-phosphate (PNP) or pyridoxamine 5'-phosphate (PMP) into pyridoxal 5'-phosphate (PLP). The sequence is that of Pyridoxine/pyridoxamine 5'-phosphate oxidase from Acaryochloris marina (strain MBIC 11017).